A 252-amino-acid chain; its full sequence is Cell division protein ZapD (252 aa).

Belongs to the ZapD family. As to quaternary structure, interacts with FtsZ.

Its subcellular location is the cytoplasm. Cell division factor that enhances FtsZ-ring assembly. Directly interacts with FtsZ and promotes bundling of FtsZ protofilaments, with a reduction in FtsZ GTPase activity. This Cupriavidus taiwanensis (strain DSM 17343 / BCRC 17206 / CCUG 44338 / CIP 107171 / LMG 19424 / R1) (Ralstonia taiwanensis (strain LMG 19424)) protein is Cell division protein ZapD.